The primary structure comprises 377 residues: Chaperone protein DnaJ 1 (377 aa).

The J domain maps to 4–68 (DYYQTLGVTR…EIRQRYDQFG (65 aa)). The segment at 136 to 218 (GGEKEIRIPH…CNGVGRKQET (83 aa)) adopts a CR-type zinc-finger fold. Zn(2+)-binding residues include C149, C152, C166, C169, C192, C195, C206, and C209. CXXCXGXG motif repeat units follow at residues 149-156 (CQVCEGTG), 166-173 (CGTCNGAG), 192-199 (CPTCNGSG), and 206-213 (CEACNGVG).

This sequence belongs to the DnaJ family. In terms of assembly, homodimer. It depends on Zn(2+) as a cofactor.

The protein localises to the cytoplasm. In terms of biological role, participates actively in the response to hyperosmotic and heat shock by preventing the aggregation of stress-denatured proteins and by disaggregating proteins, also in an autonomous, DnaK-independent fashion. Unfolded proteins bind initially to DnaJ; upon interaction with the DnaJ-bound protein, DnaK hydrolyzes its bound ATP, resulting in the formation of a stable complex. GrpE releases ADP from DnaK; ATP binding to DnaK triggers the release of the substrate protein, thus completing the reaction cycle. Several rounds of ATP-dependent interactions between DnaJ, DnaK and GrpE are required for fully efficient folding. Also involved, together with DnaK and GrpE, in the DNA replication of plasmids through activation of initiation proteins. The chain is Chaperone protein DnaJ 1 from Synechocystis sp. (strain ATCC 27184 / PCC 6803 / Kazusa).